We begin with the raw amino-acid sequence, 298 residues long: 4-hydroxy-tetrahydrodipicolinate synthase (298 aa).

Pyruvate is bound at residue Thr51. Tyr139 acts as the Proton donor/acceptor in catalysis. The active-site Schiff-base intermediate with substrate is Lys167. Pyruvate is bound at residue Ile209.

Belongs to the DapA family. Homotetramer; dimer of dimers.

It is found in the cytoplasm. It carries out the reaction L-aspartate 4-semialdehyde + pyruvate = (2S,4S)-4-hydroxy-2,3,4,5-tetrahydrodipicolinate + H2O + H(+). The protein operates within amino-acid biosynthesis; L-lysine biosynthesis via DAP pathway; (S)-tetrahydrodipicolinate from L-aspartate: step 3/4. In terms of biological role, catalyzes the condensation of (S)-aspartate-beta-semialdehyde [(S)-ASA] and pyruvate to 4-hydroxy-tetrahydrodipicolinate (HTPA). The protein is 4-hydroxy-tetrahydrodipicolinate synthase of Histophilus somni (strain 2336) (Haemophilus somnus).